The primary structure comprises 258 residues: Protein STAY-GREEN LIKE, chloroplastic (258 aa).

The protein belongs to the staygreen family. As to expression, strongly expressed in leaves, stems and panicles, and at lower levels in roots and seeds.

In terms of biological role, promotes chlorophyll degradation in leaves. May be involved in LHCI proteins degradation, regulating the balance between LHCI and LHCII. The polypeptide is Protein STAY-GREEN LIKE, chloroplastic (Oryza sativa subsp. japonica (Rice)).